A 201-amino-acid polypeptide reads, in one-letter code: Peptide deformylase (201 aa).

Residues 1 to 34 form a disordered region; the sequence is MSLNFAAMARQSERQASTVMVPKGEEQPESPKIH. Basic and acidic residues predominate over residues 23 to 32; sequence KGEEQPESPK. C121 and H163 together coordinate Fe cation. The active site involves E164. H167 lines the Fe cation pocket.

The protein belongs to the polypeptide deformylase family. Fe(2+) serves as cofactor.

It catalyses the reaction N-terminal N-formyl-L-methionyl-[peptide] + H2O = N-terminal L-methionyl-[peptide] + formate. Its function is as follows. Removes the formyl group from the N-terminal Met of newly synthesized proteins. Requires at least a dipeptide for an efficient rate of reaction. N-terminal L-methionine is a prerequisite for activity but the enzyme has broad specificity at other positions. The polypeptide is Peptide deformylase (Synechococcus sp. (strain RCC307)).